Here is a 436-residue protein sequence, read N- to C-terminus: Eukaryotic peptide chain release factor subunit 1 (436 aa).

The protein belongs to the eukaryotic release factor 1 family. As to quaternary structure, heterodimer of two subunits, one of which binds GTP.

It localises to the cytoplasm. In terms of biological role, directs the termination of nascent peptide synthesis (translation) in response to the termination codon UGA. In L.striatus UAA and UAG codes for glutamine. The sequence is that of Eukaryotic peptide chain release factor subunit 1 (eRF1) from Loxodes striatus.